The following is a 252-amino-acid chain: MGRILKAILGQLSFFTIIPSPSASLEEIAEFSFISPLMVGIITGIIDWFVVLLGIRLIGSLGALLLIPTVEIIRGFHHLDGLLDMGDALMVGKERRPQVLHDLQTGSGAIGLFLVYFSIFLIATLNLNVSNLWFFLPSEVLARASAISLLGLMKPIPGSYLGKVFHDKMRDKLFSIKFLLVQVFAILFSSPVLILAYVILLLVFYLMAKLVFDGMSGDIVGAIITLSFPIYLLVAEKTCYHYFIFQYSLTLP.

5 consecutive transmembrane segments (helical) span residues Phe33–Leu53, Thr105–Leu125, Leu132–Leu152, Phe184–Phe204, and Met215–Ala235.

Belongs to the CobS family. Requires Mg(2+) as cofactor.

The protein localises to the cell membrane. It carries out the reaction alpha-ribazole + adenosylcob(III)inamide-GDP = adenosylcob(III)alamin + GMP + H(+). The enzyme catalyses alpha-ribazole 5'-phosphate + adenosylcob(III)inamide-GDP = adenosylcob(III)alamin 5'-phosphate + GMP + H(+). It functions in the pathway cofactor biosynthesis; adenosylcobalamin biosynthesis; adenosylcobalamin from cob(II)yrinate a,c-diamide: step 7/7. Functionally, joins adenosylcobinamide-GDP and alpha-ribazole to generate adenosylcobalamin (Ado-cobalamin). Also synthesizes adenosylcobalamin 5'-phosphate from adenosylcobinamide-GDP and alpha-ribazole 5'-phosphate. This Sulfolobus acidocaldarius (strain ATCC 33909 / DSM 639 / JCM 8929 / NBRC 15157 / NCIMB 11770) protein is Adenosylcobinamide-GDP ribazoletransferase.